Here is a 124-residue protein sequence, read N- to C-terminus: Large ribosomal subunit protein bL12 (124 aa).

It belongs to the bacterial ribosomal protein bL12 family. Homodimer. Part of the ribosomal stalk of the 50S ribosomal subunit. Forms a multimeric L10(L12)X complex, where L10 forms an elongated spine to which 2 to 4 L12 dimers bind in a sequential fashion. Binds GTP-bound translation factors.

Functionally, forms part of the ribosomal stalk which helps the ribosome interact with GTP-bound translation factors. Is thus essential for accurate translation. This chain is Large ribosomal subunit protein bL12, found in Hamiltonella defensa subsp. Acyrthosiphon pisum (strain 5AT).